A 210-amino-acid polypeptide reads, in one-letter code: Cell wall protein SRL1 (210 aa).

The N-terminal stretch at Met1 to Ala19 is a signal peptide. N-linked (GlcNAc...) asparagine glycosylation is present at Asn23. Disordered regions lie at residues Ser80 to Thr99 and Leu118 to Phe142. Low complexity predominate over residues Leu118–Val127. A compositionally biased stretch (basic and acidic residues) spans Ser132–Ser141. 3 N-linked (GlcNAc...) asparagine glycosylation sites follow: Asn174, Asn200, and Asn206.

The protein localises to the secreted. The protein resides in the cell wall. It localises to the cell surface. Required to stabilize the cell wall in the absence of multiple GPI-anchored mannoproteins. In Saccharomyces cerevisiae (strain ATCC 204508 / S288c) (Baker's yeast), this protein is Cell wall protein SRL1 (SRL1).